Consider the following 101-residue polypeptide: Small ribosomal subunit protein uS14 (101 aa).

It belongs to the universal ribosomal protein uS14 family. Part of the 30S ribosomal subunit. Contacts proteins S3 and S10.

In terms of biological role, binds 16S rRNA, required for the assembly of 30S particles and may also be responsible for determining the conformation of the 16S rRNA at the A site. The sequence is that of Small ribosomal subunit protein uS14 from Pseudomonas syringae pv. syringae (strain B728a).